Consider the following 188-residue polypeptide: Putative manganese efflux pump MntP (188 aa).

A run of 6 helical transmembrane segments spans residues Ile-3–Gly-23, Leu-41–Ala-61, Ser-62–Gly-82, Trp-106–Phe-128, Ala-143–Gly-163, and Ile-168–Gly-188.

Belongs to the MntP (TC 9.B.29) family.

Its subcellular location is the cell inner membrane. Functionally, probably functions as a manganese efflux pump. The polypeptide is Putative manganese efflux pump MntP (Enterobacter sp. (strain 638)).